A 532-amino-acid polypeptide reads, in one-letter code: Hepatocyte nuclear factor 1-beta-B (532 aa).

A dimerization region spans residues 1-35; sequence MFTDMVSKLTSLQQELLSALLDSGVTKDVLVQALE. The 32-residue stretch at 5–36 folds into the HNF-p1 domain; that stretch reads MVSKLTSLQQELLSALLDSGVTKDVLVQALED. The interval 74-95 is disordered; the sequence is TGAQGKGGKLSGDEGSEDGDDF. Positions 102 to 197 constitute a POU-specific atypical domain; sequence RELQSLNTEE…IDRQFDRVQG (96 aa). Over residues 222–231 the composition is skewed to gly residues; it reads SSGAAGGSGA. 2 disordered regions span residues 222–245 and 500–532; these read SSGA…KRMR and EAGQ…LQAW. Positions 244–324 form a DNA-binding region, homeobox; HNF1-type; the sequence is MRRNRFKWGP…NRRKEEAFRQ (81 aa). The span at 505-532 shows a compositional bias: polar residues; the sequence is SHPSRYSTMDSSTITHLGSSKQCPLQAW.

It belongs to the HNF1 homeobox family. Binds DNA as a dimer. Can form homodimer or heterodimer with HNF1-alpha. First expressed at stage 10 in the intermediate mesoderm. Expressed in rhombomere r5 by 14 hpf with expression diminishing by 18 hpf.

It is found in the nucleus. Functionally, transcription factor that binds to the inverted palindrome 5'-GTTAATNATTAAC-3'. Acts downstream of hnf1ba but is not required for induction of rhombomere r5/r6 gene expression in the hindbrain. In Danio rerio (Zebrafish), this protein is Hepatocyte nuclear factor 1-beta-B.